Consider the following 378-residue polypeptide: SWI/SNF-related matrix-associated actin-dependent regulator of chromatin subfamily B member 1 (378 aa).

The tract at residues 1-106 (MIMALSKTFG…DEKYKAVSIS (106 aa)) is DNA-binding.

It belongs to the SNF5 family. As to quaternary structure, component of the multiprotein chromatin-remodeling complexes SWI/SNF. Component of neural progenitors-specific chromatin remodeling complex (npBAF complex) and the neuron-specific chromatin remodeling complex (nBAF complex). Component of the BAF (SWI/SNF) chromatin remodeling complex. Component of the SWI/SNF-B (PBAF) chromatin remodeling complex. Binds to double-stranded DNA.

The protein localises to the nucleus. Functionally, involved in chromatin-remodeling. Core component of the BAF (SWI/SNF) complex. This ATP-dependent chromatin-remodeling complex plays important roles in cell proliferation and differentiation, in cellular antiviral activities and inhibition of tumor formation. Belongs to the neural progenitors-specific chromatin remodeling complex (npBAF complex) and the neuron-specific chromatin remodeling complex (nBAF complex) and may play a role in neural development. The sequence is that of SWI/SNF-related matrix-associated actin-dependent regulator of chromatin subfamily B member 1 (smarcb1) from Xenopus laevis (African clawed frog).